Here is a 142-residue protein sequence, read N- to C-terminus: Regulator of ribonuclease activity B (142 aa).

Positions 117 to 142 (PNADEDEYGEDGEFFDDEFADDDEKR) are disordered.

The protein belongs to the RraB family. As to quaternary structure, interacts with the C-terminal region of Rne.

The protein localises to the cytoplasm. In terms of biological role, globally modulates RNA abundance by binding to RNase E (Rne) and regulating its endonucleolytic activity. Can modulate Rne action in a substrate-dependent manner by altering the composition of the degradosome. This Actinobacillus succinogenes (strain ATCC 55618 / DSM 22257 / CCUG 43843 / 130Z) protein is Regulator of ribonuclease activity B.